The following is a 284-amino-acid chain: Nucleotide-binding protein in ptsO 5'region (284 aa).

8-15 (GRSGSGKS) provides a ligand contact to ATP. A GTP-binding site is contributed by 60–63 (DARN).

It belongs to the RapZ-like family.

In terms of biological role, displays ATPase and GTPase activities. In Pseudomonas putida (Arthrobacter siderocapsulatus), this protein is Nucleotide-binding protein in ptsO 5'region.